The following is a 231-amino-acid chain: NAD(+) ADP-ribosyltransferase (231 aa).

The catalysed reaction is NAD(+) + (ADP-D-ribosyl)n-acceptor = nicotinamide + (ADP-D-ribosyl)n+1-acceptor + H(+).. Its activity is regulated as follows. Activity increases up to 5-6 times with Mg(2+) at 50 uM or higher ion concentration. 3-aminobenzamide (3-ABA) inhibits the activity by up to half and nicotinamide to a lesser extent. Zn(2+) inhibits the activity to half-maximal rate but at 500 uM concentration of the ion. Catalyzes auto- and hetero-ADP ribosylation and produces short oligomers by elongating the ADP-ribose chain (up to 6-mer). Binds DNA non-specifically but with high affinity. Forms very stable complexes with circular DNA wherein the circular DNA confers thermostability compared to linear DNA. This Saccharolobus solfataricus (Sulfolobus solfataricus) protein is NAD(+) ADP-ribosyltransferase.